The chain runs to 344 residues: Protein RecA (344 aa).

66 to 73 (GPESSGKT) is a binding site for ATP.

It belongs to the RecA family.

The protein resides in the cytoplasm. In terms of biological role, can catalyze the hydrolysis of ATP in the presence of single-stranded DNA, the ATP-dependent uptake of single-stranded DNA by duplex DNA, and the ATP-dependent hybridization of homologous single-stranded DNAs. It interacts with LexA causing its activation and leading to its autocatalytic cleavage. This Methylobacillus flagellatus (strain ATCC 51484 / DSM 6875 / VKM B-1610 / KT) protein is Protein RecA.